Consider the following 472-residue polypeptide: 3-isopropylmalate dehydratase large subunit (472 aa).

Cysteine 353, cysteine 414, and cysteine 417 together coordinate [4Fe-4S] cluster.

The protein belongs to the aconitase/IPM isomerase family. LeuC type 1 subfamily. Heterodimer of LeuC and LeuD. [4Fe-4S] cluster is required as a cofactor.

The catalysed reaction is (2R,3S)-3-isopropylmalate = (2S)-2-isopropylmalate. The protein operates within amino-acid biosynthesis; L-leucine biosynthesis; L-leucine from 3-methyl-2-oxobutanoate: step 2/4. Functionally, catalyzes the isomerization between 2-isopropylmalate and 3-isopropylmalate, via the formation of 2-isopropylmaleate. The chain is 3-isopropylmalate dehydratase large subunit from Acinetobacter baumannii (strain ATCC 17978 / DSM 105126 / CIP 53.77 / LMG 1025 / NCDC KC755 / 5377).